A 282-amino-acid chain; its full sequence is 4-hydroxy-3-methylbut-2-enyl diphosphate reductase (282 aa).

Residue Cys-12 participates in [4Fe-4S] cluster binding. Positions 40 and 72 each coordinate (2E)-4-hydroxy-3-methylbut-2-enyl diphosphate. Dimethylallyl diphosphate-binding residues include His-40 and His-72. Positions 40 and 72 each coordinate isopentenyl diphosphate. A [4Fe-4S] cluster-binding site is contributed by Cys-94. Residue His-122 participates in (2E)-4-hydroxy-3-methylbut-2-enyl diphosphate binding. His-122 contributes to the dimethylallyl diphosphate binding site. His-122 is a binding site for isopentenyl diphosphate. Glu-124 serves as the catalytic Proton donor. Thr-160 contributes to the (2E)-4-hydroxy-3-methylbut-2-enyl diphosphate binding site. Residue Cys-188 coordinates [4Fe-4S] cluster. The (2E)-4-hydroxy-3-methylbut-2-enyl diphosphate site is built by Ser-216, Asn-218, and Ser-260. Residues Ser-216, Asn-218, and Ser-260 each coordinate dimethylallyl diphosphate. Residues Ser-216, Asn-218, and Ser-260 each coordinate isopentenyl diphosphate.

The protein belongs to the IspH family. [4Fe-4S] cluster serves as cofactor.

It catalyses the reaction isopentenyl diphosphate + 2 oxidized [2Fe-2S]-[ferredoxin] + H2O = (2E)-4-hydroxy-3-methylbut-2-enyl diphosphate + 2 reduced [2Fe-2S]-[ferredoxin] + 2 H(+). The enzyme catalyses dimethylallyl diphosphate + 2 oxidized [2Fe-2S]-[ferredoxin] + H2O = (2E)-4-hydroxy-3-methylbut-2-enyl diphosphate + 2 reduced [2Fe-2S]-[ferredoxin] + 2 H(+). It participates in isoprenoid biosynthesis; dimethylallyl diphosphate biosynthesis; dimethylallyl diphosphate from (2E)-4-hydroxy-3-methylbutenyl diphosphate: step 1/1. Its pathway is isoprenoid biosynthesis; isopentenyl diphosphate biosynthesis via DXP pathway; isopentenyl diphosphate from 1-deoxy-D-xylulose 5-phosphate: step 6/6. In terms of biological role, catalyzes the conversion of 1-hydroxy-2-methyl-2-(E)-butenyl 4-diphosphate (HMBPP) into a mixture of isopentenyl diphosphate (IPP) and dimethylallyl diphosphate (DMAPP). Acts in the terminal step of the DOXP/MEP pathway for isoprenoid precursor biosynthesis. The polypeptide is 4-hydroxy-3-methylbut-2-enyl diphosphate reductase (Geotalea daltonii (strain DSM 22248 / JCM 15807 / FRC-32) (Geobacter daltonii)).